A 128-amino-acid chain; its full sequence is Small ribosomal subunit protein uS13 (128 aa).

The segment at 97 to 128 is disordered; that stretch reads PVRGQRTRSNARTRKGPRPSRIKTKKKKEQTV. Residues 101–128 show a composition bias toward basic residues; sequence QRTRSNARTRKGPRPSRIKTKKKKEQTV.

The protein belongs to the universal ribosomal protein uS13 family. As to quaternary structure, part of the 30S ribosomal subunit. Forms a loose heterodimer with protein S19. Forms two bridges to the 50S subunit in the 70S ribosome.

Located at the top of the head of the 30S subunit, it contacts several helices of the 16S rRNA. In the 70S ribosome it contacts the 23S rRNA (bridge B1a) and protein L5 of the 50S subunit (bridge B1b), connecting the 2 subunits; these bridges are implicated in subunit movement. Contacts the tRNAs in the A and P-sites. This chain is Small ribosomal subunit protein uS13, found in Pseudothermotoga lettingae (strain ATCC BAA-301 / DSM 14385 / NBRC 107922 / TMO) (Thermotoga lettingae).